Consider the following 651-residue polypeptide: PTS system sucrose-specific EIIBCA component (651 aa).

A PTS EIIB type-1 domain is found at 3-86; sequence HQEVADRVLN…IVKTGLKEVT (84 aa). Cys-25 acts as the Phosphocysteine intermediate; for EIIB activity in catalysis. 10 helical membrane passes run 109–129, 158–178, 182–202, 204–224, 226–246, 264–284, 303–323, 345–365, 404–424, and 444–464; these read VLSD…LLMA, MINA…GFSA, FGGN…PSLV, GYSV…VFGL, VAQA…FILA, FTPM…VGPV, TGWI…ITGL, FIFP…LAIF, FVFA…FHVL, and IPAF…PTFI. In terms of domain architecture, PTS EIIC type-1 spans 121–481; the sequence is LVAGGLLMAL…DDRDQVKSPA (361 aa). The 105-residue stretch at 510–614 folds into the PTS EIIA type-1 domain; the sequence is DQVFSAEIMG…DPTVMLIVTN (105 aa). His-562 (tele-phosphohistidine intermediate; for EIIA activity) is an active-site residue.

It localises to the cell membrane. It carries out the reaction N(pros)-phospho-L-histidyl-[protein](out) + sucrose = sucrose 6(G)-phosphate(in) + L-histidyl-[protein]. Functionally, the phosphoenolpyruvate-dependent sugar phosphotransferase system (sugar PTS), a major carbohydrate active transport system, catalyzes the phosphorylation of incoming sugar substrates concomitantly with their translocation across the cell membrane. This system is involved in sucrose transport. The sequence is that of PTS system sucrose-specific EIIBCA component (scrA) from Pediococcus pentosaceus.